The sequence spans 41 residues: Inducible serine protease inhibitor 3 (41 aa).

Inhibits trypsin and the toxin proteases PR1 and PR2 of M.anisopliae. Does not inhibit chymotrypsin, subtilisin Carlsberg, proteinase K and porcine pancreatic elastase. This Galleria mellonella (Greater wax moth) protein is Inducible serine protease inhibitor 3.